The following is a 224-amino-acid chain: PKHD-type hydroxylase KPN78578_12210 (224 aa).

A Fe2OG dioxygenase domain is found at Thr-77–Ser-176. His-95, Asp-97, and His-157 together coordinate Fe cation. Arg-167 is a binding site for 2-oxoglutarate.

Fe(2+) serves as cofactor. L-ascorbate is required as a cofactor.

In Klebsiella pneumoniae subsp. pneumoniae (strain ATCC 700721 / MGH 78578), this protein is PKHD-type hydroxylase KPN78578_12210.